A 380-amino-acid polypeptide reads, in one-letter code: Cyclohex-1-ene-1-carbonyl-CoA dehydrogenase (380 aa).

Catalysis depends on Asp-91, which acts as the Proton acceptor. Residues Leu-122, Ala-124, Thr-125, Ser-131, and Thr-157 each contribute to the FAD site. Residue Ser-131 participates in cyclohex-1-ene-1-carbonyl-CoA binding. Ser-131 serves as a coordination point for cyclohexa-1,5-diene-1-carbonyl-CoA. Cyclohex-1-ene-1-carbonyl-CoA-binding residues include Lys-178, Arg-242, and Thr-363. Positions 178, 242, and 363 each coordinate cyclohexa-1,5-diene-1-carbonyl-CoA. FAD is bound by residues Thr-365 and Gln-367. Arg-375 serves as a coordination point for cyclohex-1-ene-1-carbonyl-CoA. Arg-375 is a cyclohexa-1,5-diene-1-carbonyl-CoA binding site.

Belongs to the acyl-CoA dehydrogenase family. In terms of assembly, homotetramer. The cofactor is FAD.

The catalysed reaction is cyclohex-1-ene-1-carbonyl-CoA + oxidized [electron-transfer flavoprotein] + H(+) = cyclohexa-1,5-diene-1-carbonyl-CoA + reduced [electron-transfer flavoprotein]. Functionally, acyl-CoA dehydrogenase involved in the anaerobic degradation of cyclohexane carboxylic acid (CHC). Catalyzes the 1,4-dehydrogenation at C3 and C6 of cyclohex-1-ene-1-carbonyl-CoA (CHeneCoA or Ch1CoA) to cyclohexa-1,5-diene-1-carbonyl-CoA (CHdieneCoA or Ch1,5CoA). Also able to catalyze, at a lower rate, the dehydrogenation at C3 and C4 of CHdieneCoA to benzoyl-CoA. In Geobacter metallireducens (strain ATCC 53774 / DSM 7210 / GS-15), this protein is Cyclohex-1-ene-1-carbonyl-CoA dehydrogenase.